The sequence spans 39 residues: Potassium channel toxin alpha-KTx 2.18 (39 aa).

3 disulfide bridges follow: Cys-7/Cys-29, Cys-13/Cys-34, and Cys-17/Cys-36. Ile-39 is modified (isoleucine amide).

Belongs to the short scorpion toxin superfamily. Potassium channel inhibitor family. Alpha-KTx 02 subfamily. In terms of tissue distribution, expressed by the venom gland.

The protein resides in the secreted. In terms of biological role, weakly blocks Kv1.3/KCNA3 voltage-gated potassium channels. In Centruroides limpidus (Mexican scorpion), this protein is Potassium channel toxin alpha-KTx 2.18.